We begin with the raw amino-acid sequence, 515 residues long: Nectin-1 (515 aa).

An N-terminal signal peptide occupies residues 1-30; sequence MARMGLAGAAGRWWGLALGLTAFFLPGTHT. Residues 31-141 enclose the Ig-like V-type domain; sequence QVVQVNDSMY…GNRESQLNLT (111 aa). Residues 31–354 are Extracellular-facing; sequence QVVQVNDSMY…GRRAGQMPTA (324 aa). Residues asparagine 36, asparagine 72, asparagine 139, asparagine 202, asparagine 286, asparagine 297, and asparagine 332 are each glycosylated (N-linked (GlcNAc...) asparagine). A disulfide bridge connects residues cysteine 51 and cysteine 124. 2 Ig-like C2-type domains span residues 145–243 and 247–334; these read KPTN…TLNV and PEVT…VNIT. 2 disulfides stabilise this stretch: cysteine 172–cysteine 226 and cysteine 269–cysteine 316. The interval 282–299 is interaction with FGFR; sequence WTTLNGSLPKGVEAQNRT. Residues 355–375 form a helical membrane-spanning segment; the sequence is IIGGVAGSVLLVLIVVGGIIV. The Cytoplasmic segment spans residues 376–515; sequence ALRRRRHTFK…SFISKKEWYV (140 aa). The segment at 399–486 is disordered; sequence YSKAGIPQHH…DGYGDRTLGY (88 aa). Residues serine 421, serine 433, and serine 434 each carry the phosphoserine modification. Tyrosine 435 bears the Phosphotyrosine mark. Positions 447-464 are enriched in basic and acidic residues; that stretch reads GERKVGGPHPKYDEDAKR. Residue serine 509 is modified to Phosphoserine.

Belongs to the nectin family. Cis- and trans-homodimer. Can form trans-heterodimers with NECTIN3 and with NECTIN4. Interaction between NECTIN1 and NECTIN3 on the pre- and postsynaptic sites, respectively, initiates the formation of puncta adherentia junctions between axons and dendrites. Interacts (via cytoplasmic domain) with AFDN (via PDZ domain); this interaction recruits NECTIN1 to cadherin-based adherens junctions and provides a connection with the actin cytoskeleton. Interacts with integrin alphaV/beta3. Interacts (via Ig-like C2-type domain 2) with FGFR1, FGFR2 and FGFR3. As to quaternary structure, (Microbial infection) Interacts with herpes pseudorabies virus/PRV envelope glycoprotein D.

It localises to the cell membrane. The protein resides in the cell junction. The protein localises to the adherens junction. Its subcellular location is the presynaptic cell membrane. Functionally, cell adhesion molecule that promotes cell-cell contacts and plays important roles in the development of the nervous system. Acts by forming homophilic or heterophilic trans-dimers. Heterophilic interactions have been detected between NECTIN1 and NECTIN3 and between NECTIN1 and NECTIN4. Involved in axon guidance by promoting contacts between the commissural axons and the floor plate cells. Involved in synaptogegesis. Has some neurite outgrowth-promoting activity. Promotes formation of checkerboard-like cellular pattern of hair cells and supporting cells in the auditory epithelium via heterophilic interaction with NECTIN3: NECTIN1 is present in the membrane of hair cells and associates with NECTIN3 on supporting cells, thereby mediating heterotypic adhesion between these two cell types. Required for enamel mineralization. (Microbial infection) Acts as a receptor for pseudorabies virus/PRV. The polypeptide is Nectin-1 (Mus musculus (Mouse)).